The sequence spans 509 residues: Nucleoprotein (509 aa).

Residues 1–404 (MSSVLKAYER…ANTLAKLTTA (404 aa)) are ncore. RNA-binding residues include Lys-180, Arg-195, Tyr-260, Tyr-350, and Arg-354. Residues 405 to 509 (NRGADTRGGV…LNAALGDLDI (105 aa)) form a ntail region. Residues 452 to 477 (GTHDDEMPPLEEEEEDDTSAGPRTGP) form a disordered region. Acidic residues predominate over residues 458 to 469 (MPPLEEEEEDDT).

This sequence belongs to the paramyxoviruses nucleocapsid family. In terms of assembly, homomultimer; forms the nucleocapsid. Binds to the viral genomic RNA. N0 interacts with the phosphoprotein (via N-terminus); this interaction allows P to chaperon N0 to avoid N polymerization before encapsidation. Interacts as N-RNA template with the phosphoprotein (via C-terminus); this interaction positions the polymerase on the template.

It is found in the virion. It localises to the host cytoplasm. Functionally, forms the helical nucleocapsid (NC), protecting the genome from nucleases. The encapsidated genomic RNA serves as template for transcription and replication; encapsidation by N is coupled to RNA synthesis. Forms the encapsidation complex with the phosphoprotein protein P. Before encapsidation, the newly synthesized free N protein, so-called N0, is chaperoned by P. The sequence is that of Nucleoprotein (NP) from Canis lupus familiaris (Dog).